The chain runs to 726 residues: Methyltransferase FGSG_00040 (726 aa).

TPR repeat units lie at residues 187 to 220 (SSDI…GQNV), 224 to 257 (QLAF…AMPS), and 258 to 291 (EKSL…YPEN). Residues 336–531 (APVEIRESPG…AKTEIFFCYR (196 aa)) form the SET domain. Tyr-530 is an S-adenosyl-L-methionine binding site.

Belongs to the class V-like SAM-binding methyltransferase superfamily.

Its pathway is mycotoxin biosynthesis. Its function is as follows. Methyltransferase; part of the gene cluster that mediates the biosynthesis of gramillins A and B, bicyclic lipopeptides that induce cell death in maize leaves but not in wheat leaves. The nonribosomal peptide synthetase GRA1 incorporates respectively a glutamic adic (Glu), a leucine (Leu), a serine (Ser), a hydroxyglutamine (HOGln), a 2-amino decanoic acid, and 2 cysteins (CysB and CysA). The biosynthesis of 2-amino decanoic acid incorporated in gramillins could be initiated by a fatty acid synthase composed of the alpha and beta subunits FGSG_00036 and FGSG_11656. The cytochrome P450 monooxygenase FGSG_15680 could hydroxylate the fatty acid chain. Subsequent oxidation to the ketone by the oxidoreductase FGSG_00048 and transamination by aminotransferase FGSG_00049 could form 2-amino-decanoic acid. On the other hand, FGSG_15680 could also be responsible for the HO-modified glutamine at the gamma-position. Whether hydroxylation occurs on the fully assembled product or on the Gln residue prior to assembly into the gramillins requires further proof. The thioredoxin FGSG_00043 could also be required for the disulfide-bond formation between CysA and CysB. The specific involvement of the remaining proteins from the cluster is more difficult to discern, but could have broader regulatory (FGSG_00040 and FGSG_11657) or enzymatic functions (FGSG_00044 and FGSG_00045). The final C-domain of GRA1 does not possess the expected sequence of a termination CT domain, often implicated in macrocyclization and release of a cyclopeptidein fungal NRPs; and the thioesterase FGSG_00047 may act in concert with the terminal C-domain of GRA1 to catalyze the formation of the macrocyclic anhydride and release of the products. The sequence is that of Methyltransferase FGSG_00040 from Gibberella zeae (strain ATCC MYA-4620 / CBS 123657 / FGSC 9075 / NRRL 31084 / PH-1) (Wheat head blight fungus).